A 251-amino-acid chain; its full sequence is uncharacterized protein (251 aa).

This is an uncharacterized protein from Acanthamoeba polyphaga mimivirus (APMV).